Consider the following 198-residue polypeptide: MLYLVLFLVPFNSIQITIYDQENFQGKRMEFTSSCPNVSERNFDNVRSLKVECGAWIGYEHTSFCGQQFILERGEYPRWDAWSGSNAYHIERLMSFRPICSANHKESKITIFEKENFIGRQWEICDDYPSLQAMGWFNNEVGSMKIQCGAWVCYQYPGYRGYQYILECDHHGGDYKHWPEWGSHAQTSQIQSIRRIQQ.

The interval 1–13 is N-terminal arm; the sequence is MLYLVLFLVPFNS. 2 consecutive Beta/gamma crystallin 'Greek key' domains span residues 14–53 and 54–100; these read IQIT…KVEC and GAWI…RPIC. S-glutathionyl cysteine; alternate is present on residues Cys-65 and Cys-100. S-methylcysteine; alternate occurs at positions 65 and 100. The tract at residues 101-106 is connecting peptide; that stretch reads SANHKE. 2 consecutive Beta/gamma crystallin 'Greek key' domains span residues 107-148 and 149-197; these read SKIT…KIQC and GAWV…RRIQ.

The protein belongs to the beta/gamma-crystallin family. As to quaternary structure, homo/heterodimer, or complexes of higher-order. The structure of beta-crystallin oligomers seems to be stabilized through interactions between the N-terminal arms. Interacts with CRYBA1.

Its function is as follows. Crystallins are the dominant structural components of the vertebrate eye lens. In Mus musculus (Mouse), this protein is Beta-crystallin A1.